A 650-amino-acid chain; its full sequence is Chaperone protein HtpG (650 aa).

Positions 1–356 (MSTRVETLEF…THDLSLNISR (356 aa)) are a; substrate-binding. The tract at residues 222–245 (AKDRDSNDDGTAESGAGAENAGDR) is disordered. Residues 357-572 (EILQQDRRIQ…TFDMTPALEK (216 aa)) are b. Positions 573–650 (MYRAMGHEMP…LLAERLAEAL (78 aa)) are c.

This sequence belongs to the heat shock protein 90 family. In terms of assembly, homodimer.

It localises to the cytoplasm. In terms of biological role, molecular chaperone. Has ATPase activity. This chain is Chaperone protein HtpG, found in Frankia casuarinae (strain DSM 45818 / CECT 9043 / HFP020203 / CcI3).